Here is a 345-residue protein sequence, read N- to C-terminus: MASSSNYDGILLGMGNPLLDISAVVDDEFLTKYDIKLNNAILAEDKHLPMYDEMSSKFNVEYIAGGATQNSIKVAQWMLQIPGATSYMGSIGKDKYGEAMKKDATAAGVNVHYYEDESAPTGTCGVCVVGGERSLIANLSAANCYKVDHLKKPENWALVEKAKFYYIAGFFLTVSPESIQLVSEHAAANNKVFTMNLSAPFICEFFKDVQEKFLPYMDFVFGNETEARTFSRVHGWETEDVEQIAIKISQLPKATGTYKRTTVITQGADPVVVAEDGKVKKYPVIPLPKEKLVDTNGAGDAFVGGFMSQLVKEKSIEECVKAGCYASNVVIQRSGCTYPEKPDFN.

D300 is a catalytic residue.

It belongs to the carbohydrate kinase PfkB family. As to quaternary structure, interacts with the begomovirus AL2 protein and the curtovirus L2 protein. Interacts with KIN11. Mg(2+) is required as a cofactor. Phosphorylated by KIN11. As to expression, widely expressed.

It localises to the cytoplasm. It catalyses the reaction adenosine + ATP = AMP + ADP + H(+). Its pathway is purine metabolism; AMP biosynthesis via salvage pathway; AMP from adenosine: step 1/1. Inactivated by the begomovirus AL2 protein or the curtovirus L2 protein. Functionally, ATP dependent phosphorylation of adenosine and other related nucleoside analogs to monophosphate derivatives. Essential to sustain methyl recycling. This is Adenosine kinase 2 from Arabidopsis thaliana (Mouse-ear cress).